The following is a 152-amino-acid chain: Sec-independent protein translocase protein TatB (152 aa).

A helical transmembrane segment spans residues 1–21; the sequence is MFDLGWSELLVIGVVALIVVG.

It belongs to the TatB family. In terms of assembly, the Tat system comprises two distinct complexes: a TatABC complex, containing multiple copies of TatA, TatB and TatC subunits, and a separate TatA complex, containing only TatA subunits. Substrates initially bind to the TatABC complex, which probably triggers association of the separate TatA complex to form the active translocon.

The protein resides in the cell inner membrane. Part of the twin-arginine translocation (Tat) system that transports large folded proteins containing a characteristic twin-arginine motif in their signal peptide across membranes. Together with TatC, TatB is part of a receptor directly interacting with Tat signal peptides. TatB may form an oligomeric binding site that transiently accommodates folded Tat precursor proteins before their translocation. The protein is Sec-independent protein translocase protein TatB of Ruegeria pomeroyi (strain ATCC 700808 / DSM 15171 / DSS-3) (Silicibacter pomeroyi).